The primary structure comprises 419 residues: Fusaric acid cluster transcription factor FUB10 (419 aa).

Residues 16–47 constitute a DNA-binding region (zn(2)-C6 fungal-type); that stretch reads CDRCRAQKLRCHRDSGHSTDACLRCLKSGIEC. The disordered stretch occupies residues 50–92; the sequence is SKARPTGRPPSRQVQPTVVVEQGDTSSSSHTTDSSPSAGGTDM. The span at 74–86 shows a compositional bias: low complexity; that stretch reads TSSSSHTTDSSPS.

The protein localises to the nucleus. In terms of biological role, transcription factor that regulates the expression of the gene cluster that mediates the biosynthesis of fusaric acid, a mycotoxin with low to moderate toxicity to animals and humans, but with high phytotoxic properties. This Gibberella fujikuroi (strain CBS 195.34 / IMI 58289 / NRRL A-6831) (Bakanae and foot rot disease fungus) protein is Fusaric acid cluster transcription factor FUB10.